The following is a 231-amino-acid chain: Orotidine 5'-phosphate decarboxylase (231 aa).

Residues aspartate 11, lysine 32, 59–68 (DLKFHDIPNT), threonine 118, arginine 180, glutamine 189, glycine 209, and arginine 210 each bind substrate. The Proton donor role is filled by lysine 61.

The protein belongs to the OMP decarboxylase family. Type 1 subfamily. As to quaternary structure, homodimer.

It carries out the reaction orotidine 5'-phosphate + H(+) = UMP + CO2. It participates in pyrimidine metabolism; UMP biosynthesis via de novo pathway; UMP from orotate: step 2/2. Functionally, catalyzes the decarboxylation of orotidine 5'-monophosphate (OMP) to uridine 5'-monophosphate (UMP). The chain is Orotidine 5'-phosphate decarboxylase from Synechocystis sp. (strain ATCC 27184 / PCC 6803 / Kazusa).